A 184-amino-acid chain; its full sequence is U3 small nucleolar ribonucleoprotein protein IMP3 (184 aa).

The region spanning 109 to 175 (RRLPTVLLKL…IKRHVLEYNE (67 aa)) is the S4 RNA-binding domain.

The protein belongs to the universal ribosomal protein uS4 family. In terms of assembly, part of the small subunit (SSU) processome, composed of more than 70 proteins and the RNA chaperone small nucleolar RNA (snoRNA) U3. Component of a heterotrimeric complex containing IMP3, IMP4 and MPHOSPH10. Interacts with MPHOSPH10.

The protein localises to the nucleus. It localises to the nucleolus. Functionally, component of the 60-80S U3 small nucleolar ribonucleoprotein (U3 snoRNP). Required for the early cleavages during pre-18S ribosomal RNA processing. Part of the small subunit (SSU) processome, first precursor of the small eukaryotic ribosomal subunit. During the assembly of the SSU processome in the nucleolus, many ribosome biogenesis factors, an RNA chaperone and ribosomal proteins associate with the nascent pre-rRNA and work in concert to generate RNA folding, modifications, rearrangements and cleavage as well as targeted degradation of pre-ribosomal RNA by the RNA exosome. This chain is U3 small nucleolar ribonucleoprotein protein IMP3, found in Homo sapiens (Human).